Here is a 710-residue protein sequence, read N- to C-terminus: Pentatricopeptide repeat-containing protein At3g14330 (710 aa).

PPR repeat units follow at residues 166 to 196, 200 to 234, 235 to 269, 270 to 304, 305 to 331, 336 to 370, 371 to 401, 402 to 436, 437 to 467, and 473 to 503; these read NPKL…VTDS, TEKV…FIEP, GNFS…KEKV, DQVV…NVVT, WNSL…MQEE, SWAT…KEKP, DVPL…MLTK, DLAS…GVAP, DGIT…MKTE, and ALEH…MPFK. A type E motif region spans residues 508-583; sequence IWGSLLNSCR…EAGCSWVQVK (76 aa). A type E(+) motif region spans residues 584-615; sequence DKIQIFVAGGGYEFRNSDEYKKVWTELQEAIE. The interval 616-710 is type DYW motif; that stretch reads KSGYSPNTSV…DGICSCKDYW (95 aa).

The protein belongs to the PPR family. PCMP-H subfamily.

The chain is Pentatricopeptide repeat-containing protein At3g14330 (PCMP-H57) from Arabidopsis thaliana (Mouse-ear cress).